A 347-amino-acid chain; its full sequence is GMP reductase (347 aa).

108-131 (ADFEKTKQILDLNPALNFVCIDVA) serves as a coordination point for NADP(+). 2 residues coordinate K(+): G181 and G183. Catalysis depends on C186, which acts as the Thioimidate intermediate. 216–239 (IVSDGGCTTPGDVAKAFGGGADFV) serves as a coordination point for NADP(+).

It belongs to the IMPDH/GMPR family. GuaC type 1 subfamily. In terms of assembly, homotetramer.

It catalyses the reaction IMP + NH4(+) + NADP(+) = GMP + NADPH + 2 H(+). Catalyzes the irreversible NADPH-dependent deamination of GMP to IMP. It functions in the conversion of nucleobase, nucleoside and nucleotide derivatives of G to A nucleotides, and in maintaining the intracellular balance of A and G nucleotides. This is GMP reductase from Shigella flexneri.